Here is a 489-residue protein sequence, read N- to C-terminus: Pup--protein ligase (489 aa).

Glu-25 lines the Mg(2+) pocket. ATP is bound at residue Arg-69. Tyr-71 provides a ligand contact to Mg(2+). Asp-73 serves as the catalytic Proton acceptor. Glu-79 serves as a coordination point for Mg(2+). Thr-82 and Trp-447 together coordinate ATP.

The protein belongs to the Pup ligase/Pup deamidase family. Pup-conjugating enzyme subfamily.

It carries out the reaction ATP + [prokaryotic ubiquitin-like protein]-L-glutamate + [protein]-L-lysine = ADP + phosphate + N(6)-([prokaryotic ubiquitin-like protein]-gamma-L-glutamyl)-[protein]-L-lysine.. It functions in the pathway protein degradation; proteasomal Pup-dependent pathway. The protein operates within protein modification; protein pupylation. Functionally, catalyzes the covalent attachment of the prokaryotic ubiquitin-like protein modifier Pup to the proteasomal substrate proteins, thereby targeting them for proteasomal degradation. This tagging system is termed pupylation. The ligation reaction involves the side-chain carboxylate of the C-terminal glutamate of Pup and the side-chain amino group of a substrate lysine. The chain is Pup--protein ligase from Corynebacterium efficiens (strain DSM 44549 / YS-314 / AJ 12310 / JCM 11189 / NBRC 100395).